Here is a 360-residue protein sequence, read N- to C-terminus: Polyamine aminopropyltransferase 2 (360 aa).

The 232-residue stretch at 68–299 folds into the PABS domain; the sequence is DIWDEISLKE…TDWGFHIAAN (232 aa). Glutamine 94 is a binding site for S-methyl-5'-thioadenosine. 2 residues coordinate spermidine: histidine 123 and aspartate 147. Residues aspartate 167 and 201 to 202 each bind S-methyl-5'-thioadenosine; that span reads DA. Aspartate 219 functions as the Proton acceptor in the catalytic mechanism.

Belongs to the spermidine/spermine synthase family. Homodimer or homotetramer.

It is found in the cytoplasm. The catalysed reaction is S-adenosyl 3-(methylsulfanyl)propylamine + putrescine = S-methyl-5'-thioadenosine + spermidine + H(+). Its pathway is amine and polyamine biosynthesis; spermidine biosynthesis; spermidine from putrescine: step 1/1. Functionally, catalyzes the irreversible transfer of a propylamine group from the amino donor S-adenosylmethioninamine (decarboxy-AdoMet) to putrescine (1,4-diaminobutane) to yield spermidine. This is Polyamine aminopropyltransferase 2 from Bacillus anthracis.